Consider the following 390-residue polypeptide: Tryptophan synthase beta chain (390 aa).

Position 90 is an N6-(pyridoxal phosphate)lysine (Lys90).

The protein belongs to the TrpB family. Tetramer of two alpha and two beta chains. Pyridoxal 5'-phosphate is required as a cofactor.

It catalyses the reaction (1S,2R)-1-C-(indol-3-yl)glycerol 3-phosphate + L-serine = D-glyceraldehyde 3-phosphate + L-tryptophan + H2O. Its pathway is amino-acid biosynthesis; L-tryptophan biosynthesis; L-tryptophan from chorismate: step 5/5. Functionally, the beta subunit is responsible for the synthesis of L-tryptophan from indole and L-serine. The protein is Tryptophan synthase beta chain of Bacteroides fragilis (strain ATCC 25285 / DSM 2151 / CCUG 4856 / JCM 11019 / LMG 10263 / NCTC 9343 / Onslow / VPI 2553 / EN-2).